A 241-amino-acid chain; its full sequence is uncharacterized protein (241 aa).

This is an uncharacterized protein from Ictaluridae (bullhead catfishes).